We begin with the raw amino-acid sequence, 642 residues long: Threonine--tRNA ligase (642 aa).

In terms of domain architecture, TGS spans 1–61; the sequence is MIKVTFPDGN…EHDGKLQLLT (61 aa). Residues 240–539 form a catalytic region; sequence DHRKIGKDLD…LIEEYKGSFP (300 aa). Residues Cys-334, His-385, and His-516 each coordinate Zn(2+).

Belongs to the class-II aminoacyl-tRNA synthetase family. In terms of assembly, homodimer. Requires Zn(2+) as cofactor.

It localises to the cytoplasm. The enzyme catalyses tRNA(Thr) + L-threonine + ATP = L-threonyl-tRNA(Thr) + AMP + diphosphate + H(+). In terms of biological role, catalyzes the attachment of threonine to tRNA(Thr) in a two-step reaction: L-threonine is first activated by ATP to form Thr-AMP and then transferred to the acceptor end of tRNA(Thr). Also edits incorrectly charged L-seryl-tRNA(Thr). The protein is Threonine--tRNA ligase of Acholeplasma laidlawii (strain PG-8A).